The primary structure comprises 309 residues: Ferrochelatase (309 aa).

Residues histidine 185 and glutamate 264 each coordinate Fe cation.

The protein belongs to the ferrochelatase family.

Its subcellular location is the cytoplasm. The enzyme catalyses heme b + 2 H(+) = protoporphyrin IX + Fe(2+). It functions in the pathway porphyrin-containing compound metabolism; protoheme biosynthesis; protoheme from protoporphyrin-IX: step 1/1. Functionally, catalyzes the ferrous insertion into protoporphyrin IX. This is Ferrochelatase from Aquifex aeolicus (strain VF5).